Consider the following 189-residue polypeptide: Group XIIA secretory phospholipase A2 (189 aa).

Positions 1 to 22 (MALLSRPALTLLLLLMAAVVRC) are cleaved as a signal peptide. Positions 88, 90, and 92 each coordinate Ca(2+). His110 is a catalytic residue. Ca(2+) is bound at residue Asp111. Residue Asp125 is part of the active site.

Requires Ca(2+) as cofactor. Abundantly expressed in heart, skeletal muscle, kidney, liver and pancreas.

The protein resides in the secreted. It localises to the cytoplasm. It carries out the reaction a 1,2-diacyl-sn-glycero-3-phosphocholine + H2O = a 1-acyl-sn-glycero-3-phosphocholine + a fatty acid + H(+). PA2 catalyzes the calcium-dependent hydrolysis of the 2-acyl groups in 3-sn-phosphoglycerides. Does not exhibit detectable activity toward sn-2-arachidonoyl- or linoleoyl-phosphatidylcholine or -phosphatidylethanolamine. In Homo sapiens (Human), this protein is Group XIIA secretory phospholipase A2 (PLA2G12A).